The sequence spans 364 residues: RNA-binding protein 48 (364 aa).

One can recognise an RRM domain in the interval 51–129 (RYLLVQGVPA…GQLHVCYAPE (79 aa)). Over residues 157–174 (LHSQQAEVNTESSSSTDT) the composition is skewed to polar residues. Disordered stretches follow at residues 157 to 191 (LHSQ…EARR), 239 to 291 (SLHN…ESRK), and 343 to 364 (ASVP…RRRI). Over residues 247–262 (VQKTSTQSESSSSSGV) the composition is skewed to low complexity.

Belongs to the RBM48 family. Component of the minor spliceosome, which splices U12-type introns.

Its function is as follows. As a component of the minor spliceosome, involved in the splicing of U12-type introns in pre-mRNAs. The chain is RNA-binding protein 48 (rbm48) from Danio rerio (Zebrafish).